The following is a 673-amino-acid chain: Pesticin receptor (673 aa).

Residues 1–22 (MKMTRLYPLALGGLLLPAIANA) form the signal peptide. Positions 30–37 (STLEVTAS) match the TonB box motif. Positions 41–155 (SRSASANNVS…QGGIINIVTQ (115 aa)) constitute a TBDR plug domain. Residues 160-672 (TPRGYIEGGV…TVGINTRIDF (513 aa)) enclose the TBDR beta-barrel domain. The short motif at 657-673 (QVNMGRTVGINTRIDFF) is the TonB C-terminal box element.

It belongs to the TonB-dependent receptor family.

The protein resides in the cell outer membrane. Its function is as follows. Receptor for the bacteriocin pesticin and for the siderophore yersiniabactin. The sequence is that of Pesticin receptor (fyuA) from Yersinia enterocolitica serotype O:8 / biotype 1B (strain NCTC 13174 / 8081).